Consider the following 20-residue polypeptide: Ferric reductase A (20 aa).

In terms of assembly, monomer.

The enzyme catalyses 2 a Fe(II)-siderophore + NAD(+) + H(+) = 2 a Fe(III)-siderophore + NADH. Its function is as follows. Reductase activity that acts on Fe(3+)-chelates and NADH as an electron donor and requires the presence of FMN for full activity. May play a role in iron uptake. In Paracoccus denitrificans, this protein is Ferric reductase A (ferA).